A 238-amino-acid polypeptide reads, in one-letter code: Ribonuclease PH (238 aa).

Phosphate is bound by residues R86 and 124–126 (GTR).

Belongs to the RNase PH family. As to quaternary structure, homohexameric ring arranged as a trimer of dimers.

It carries out the reaction tRNA(n+1) + phosphate = tRNA(n) + a ribonucleoside 5'-diphosphate. Phosphorolytic 3'-5' exoribonuclease that plays an important role in tRNA 3'-end maturation. Removes nucleotide residues following the 3'-CCA terminus of tRNAs; can also add nucleotides to the ends of RNA molecules by using nucleoside diphosphates as substrates, but this may not be physiologically important. Probably plays a role in initiation of 16S rRNA degradation (leading to ribosome degradation) during starvation. The polypeptide is Ribonuclease PH (Cupriavidus metallidurans (strain ATCC 43123 / DSM 2839 / NBRC 102507 / CH34) (Ralstonia metallidurans)).